We begin with the raw amino-acid sequence, 251 residues long: PF03932 family protein CutC (251 aa).

Belongs to the CutC family.

Its subcellular location is the cytoplasm. This is PF03932 family protein CutC from Edwardsiella ictaluri (strain 93-146).